The primary structure comprises 74 residues: MARRRRRNKVCSFCAEKTTTVSYKDLDRLKKYITERGKILPRRINGNCAKHQRQLTTAIKKARQLALLPYTVEN.

The protein belongs to the bacterial ribosomal protein bS18 family. As to quaternary structure, part of the 30S ribosomal subunit. Forms a tight heterodimer with protein bS6.

In terms of biological role, binds as a heterodimer with protein bS6 to the central domain of the 16S rRNA, where it helps stabilize the platform of the 30S subunit. The chain is Small ribosomal subunit protein bS18 from Natranaerobius thermophilus (strain ATCC BAA-1301 / DSM 18059 / JW/NM-WN-LF).